The primary structure comprises 306 residues: Agmatinase (306 aa).

H126, D149, H151, D153, D230, and D232 together coordinate Mn(2+).

It belongs to the arginase family. Agmatinase subfamily. It depends on Mn(2+) as a cofactor.

It catalyses the reaction agmatine + H2O = urea + putrescine. It functions in the pathway amine and polyamine biosynthesis; putrescine biosynthesis via agmatine pathway; putrescine from agmatine: step 1/1. In terms of biological role, catalyzes the formation of putrescine from agmatine. This chain is Agmatinase, found in Shigella dysenteriae serotype 1 (strain Sd197).